The sequence spans 172 residues: UPF0398 protein gbs0290 (172 aa).

Belongs to the UPF0398 family.

The chain is UPF0398 protein gbs0290 from Streptococcus agalactiae serotype III (strain NEM316).